The following is a 454-amino-acid chain: Adenylosuccinate synthetase isozyme 1 B (454 aa).

A disordered region spans residues Met-1–Tyr-24. GTP-binding positions include Gly-39–Lys-45 and Gly-67–Thr-69. Asp-40 acts as the Proton acceptor in catalysis. Asp-40 and Gly-67 together coordinate Mg(2+). Asp-40 contacts substrate. IMP is bound by residues Asp-40–Lys-43, Asn-65–His-68, Thr-160, Arg-174, Asn-253, Thr-268, and Arg-332. The active-site Proton donor is His-68. Position 328-334 (Val-328–Arg-334) interacts with substrate. Residues Arg-334, Lys-360–Asp-362, and Gly-442–Lys-445 contribute to the GTP site.

Belongs to the adenylosuccinate synthetase family. As to quaternary structure, homodimer. It depends on Mg(2+) as a cofactor.

The protein resides in the cytoplasm. It catalyses the reaction IMP + L-aspartate + GTP = N(6)-(1,2-dicarboxyethyl)-AMP + GDP + phosphate + 2 H(+). The protein operates within purine metabolism; AMP biosynthesis via de novo pathway; AMP from IMP: step 1/2. In terms of biological role, component of the purine nucleotide cycle (PNC), which interconverts IMP and AMP to regulate the nucleotide levels in various tissues, and which contributes to glycolysis and ammoniagenesis. Catalyzes the first committed step in the biosynthesis of AMP from IMP. In Xenopus laevis (African clawed frog), this protein is Adenylosuccinate synthetase isozyme 1 B (adss1-b).